Consider the following 126-residue polypeptide: MDVLGRHIIAELWECNLEKLNNIDFIRDTFVEAAVLAGAEVREVVFHPFAPYGISGVVIISESHLTIHSFPEHGYASIDVYTCGDKVDPNIAVKHIADALESSVGQFREIPRGMGPVNAKPIQKIK.

Ser-63 functions as the Schiff-base intermediate with substrate; via pyruvic acid in the catalytic mechanism. Pyruvic acid (Ser); by autocatalysis is present on Ser-63. His-68 (proton acceptor; for processing activity) is an active-site residue. The Proton donor; for catalytic activity role is filled by Cys-83.

It belongs to the prokaryotic AdoMetDC family. Type 1 subfamily. In terms of assembly, heterotetramer of two alpha and two beta chains arranged as a dimer of alpha/beta heterodimers. It depends on pyruvate as a cofactor. Post-translationally, is synthesized initially as an inactive proenzyme. Formation of the active enzyme involves a self-maturation process in which the active site pyruvoyl group is generated from an internal serine residue via an autocatalytic post-translational modification. Two non-identical subunits are generated from the proenzyme in this reaction, and the pyruvate is formed at the N-terminus of the alpha chain, which is derived from the carboxyl end of the proenzyme. The post-translation cleavage follows an unusual pathway, termed non-hydrolytic serinolysis, in which the side chain hydroxyl group of the serine supplies its oxygen atom to form the C-terminus of the beta chain, while the remainder of the serine residue undergoes an oxidative deamination to produce ammonia and the pyruvoyl group blocking the N-terminus of the alpha chain.

The catalysed reaction is S-adenosyl-L-methionine + H(+) = S-adenosyl 3-(methylsulfanyl)propylamine + CO2. Its pathway is amine and polyamine biosynthesis; S-adenosylmethioninamine biosynthesis; S-adenosylmethioninamine from S-adenosyl-L-methionine: step 1/1. In terms of biological role, catalyzes the decarboxylation of S-adenosylmethionine to S-adenosylmethioninamine (dcAdoMet), the propylamine donor required for the synthesis of the polyamines spermine and spermidine from the diamine putrescine. This chain is S-adenosylmethionine decarboxylase proenzyme, found in Oceanobacillus iheyensis (strain DSM 14371 / CIP 107618 / JCM 11309 / KCTC 3954 / HTE831).